We begin with the raw amino-acid sequence, 461 residues long: Glucan endo-1,3-beta-glucosidase (461 aa).

A signal peptide spans 1-23; the sequence is MPLLILLMLLAAGAAGAESATPS. The active-site Proton donor is Glu123. The active-site Nucleophile is the Glu265. Positions 350–375 are disordered; it reads GASVAPTPSPNPSPNPSPKPAPSGGG. The span at 356–370 shows a compositional bias: pro residues; the sequence is TPSPNPSPNPSPKPA. Cys378 and Cys439 form a disulfide bridge.

This sequence belongs to the glycosyl hydrolase 17 family. In terms of processing, contains two additional disulfide bonds.

The enzyme catalyses Hydrolysis of (1-&gt;3)-beta-D-glucosidic linkages in (1-&gt;3)-beta-D-glucans.. Is thought to be an important plant defense-related product against fungal pathogens. The polypeptide is Glucan endo-1,3-beta-glucosidase (GLC1) (Triticum aestivum (Wheat)).